Consider the following 341-residue polypeptide: Ribosomal RNA small subunit methyltransferase C (341 aa).

This sequence belongs to the methyltransferase superfamily. RsmC family. Monomer.

It localises to the cytoplasm. It catalyses the reaction guanosine(1207) in 16S rRNA + S-adenosyl-L-methionine = N(2)-methylguanosine(1207) in 16S rRNA + S-adenosyl-L-homocysteine + H(+). Specifically methylates the guanine in position 1207 of 16S rRNA in the 30S particle. The chain is Ribosomal RNA small subunit methyltransferase C from Shewanella amazonensis (strain ATCC BAA-1098 / SB2B).